The following is a 431-amino-acid chain: Peptidase B (431 aa).

The Mn(2+) site is built by lysine 196 and aspartate 201. Lysine 208 is an active-site residue. Aspartate 219, aspartate 278, and glutamate 280 together coordinate Mn(2+). Arginine 282 is an active-site residue.

The protein belongs to the peptidase M17 family. Homohexamer. Mn(2+) serves as cofactor.

It localises to the cytoplasm. It carries out the reaction Release of an N-terminal amino acid, Xaa, from a peptide or arylamide. Xaa is preferably Glu or Asp but may be other amino acids, including Leu, Met, His, Cys and Gln.. Probably plays an important role in intracellular peptide degradation. This chain is Peptidase B, found in Vibrio atlanticus (strain LGP32) (Vibrio splendidus (strain Mel32)).